We begin with the raw amino-acid sequence, 209 residues long: Small ribosomal subunit protein uS4 (209 aa).

An S4 RNA-binding domain is found at 98 to 164 (RRLDNVVYRL…LPVKNAIELN (67 aa)).

The protein belongs to the universal ribosomal protein uS4 family. In terms of assembly, part of the 30S ribosomal subunit. Contacts protein S5. The interaction surface between S4 and S5 is involved in control of translational fidelity.

Functionally, one of the primary rRNA binding proteins, it binds directly to 16S rRNA where it nucleates assembly of the body of the 30S subunit. In terms of biological role, with S5 and S12 plays an important role in translational accuracy. This chain is Small ribosomal subunit protein uS4, found in Thermosipho africanus (strain TCF52B).